Reading from the N-terminus, the 280-residue chain is Feruloyl esterase 1 (280 aa).

Residues 1–20 (MKAFATRALAFSVAAGQALA) form the signal peptide. Disulfide bonds link Cys49–Cys278, Cys111–Cys114, and Cys247–Cys254. Asn99 carries N-linked (GlcNAc...) asparagine glycosylation. Ser153 serves as the catalytic Nucleophile. Asp214 acts as the Charge relay system in catalysis. His267 acts as the Charge relay system in catalysis.

It belongs to the AB hydrolase superfamily. FaeA family. Post-translationally, glycosylated.

Its subcellular location is the secreted. The catalysed reaction is feruloyl-polysaccharide + H2O = ferulate + polysaccharide.. Metal or basic ions Mn(2+), Ni(+), Mg(2+), and NH(4)(+) decrease the activity by 4.4% to 14.1%. The enzymatic activity is inhibited by Zn(2+) at a low concentration (1 mM) but not a high concentration (5 mM). Loses about a quarter of activity by the addition of 1 mM of Cu(2+) or Fe(3+) and activity is completely suppressed when the concentration was up to 5 mM. Low concentrations (0.25 and 0.5 M) of NaCl improve the activity by 5.6 % or 8.3%, respectively. Its function is as follows. Involved in degradation of plant cell walls. Hydrolyzes the feruloyl-arabinose ester bond in arabinoxylans, and the feruloyl-galactose ester bond in pectin. This is Feruloyl esterase 1 from Penicillium parvum (Eupenicillium parvum).